The chain runs to 103 residues: Cell division protein FtsB (103 aa).

Over 1 to 3 the chain is Cytoplasmic; the sequence is MGK. The chain crosses the membrane as a helical span at residues 4–21; it reads LTLLLLALLVWLQYSLWF. Residues 22–103 lie on the Periplasmic side of the membrane; sequence GKNGIHDYSR…RAATAGQTHR (82 aa). The stretch at 33–62 forms a coiled coil; that stretch reads NDDVVAQQATNAKLKARNDQLFAEIDDLNG.

This sequence belongs to the FtsB family. In terms of assembly, part of a complex composed of FtsB, FtsL and FtsQ.

It is found in the cell inner membrane. Essential cell division protein. May link together the upstream cell division proteins, which are predominantly cytoplasmic, with the downstream cell division proteins, which are predominantly periplasmic. The chain is Cell division protein FtsB from Salmonella agona (strain SL483).